A 407-amino-acid chain; its full sequence is Argininosuccinate synthase (407 aa).

ATP-binding positions include 16–24 and alanine 44; that span reads AYSGGLDTS. Positions 96 and 101 each coordinate L-citrulline. Glycine 126 provides a ligand contact to ATP. L-aspartate is bound by residues threonine 128, asparagine 132, and aspartate 133. Asparagine 132 lines the L-citrulline pocket. The L-citrulline site is built by arginine 136, serine 185, serine 194, glutamate 270, and tyrosine 282.

The protein belongs to the argininosuccinate synthase family. Type 1 subfamily. As to quaternary structure, homotetramer.

It localises to the cytoplasm. It carries out the reaction L-citrulline + L-aspartate + ATP = 2-(N(omega)-L-arginino)succinate + AMP + diphosphate + H(+). The protein operates within amino-acid biosynthesis; L-arginine biosynthesis; L-arginine from L-ornithine and carbamoyl phosphate: step 2/3. The chain is Argininosuccinate synthase from Shewanella sediminis (strain HAW-EB3).